The chain runs to 596 residues: Putative terpene synthase 2, chloroplastic (596 aa).

Residues 1–46 (MATLSMQVSTLSKQVKNLNTFGMGSASKLPMVARRVSTTRLRPICS) constitute a chloroplast transit peptide. Aspartate 349 and aspartate 353 together coordinate Mn(2+). A DDXXD motif motif is present at residues 349-353 (DDVYD). 2 homodimerization regions span residues 355–361 (YGTLDEL) and 427–464 (EAKW…FTLP). The Mn(2+) site is built by aspartate 493 and glutamate 501.

Belongs to the terpene synthase family. In terms of assembly, homodimer. Mn(2+) serves as cofactor. Requires Mg(2+) as cofactor.

It localises to the plastid. It is found in the chloroplast. Its pathway is secondary metabolite biosynthesis; terpenoid biosynthesis. Functionally, putative monoterpene synthase inactive on geranyl diphosphate (GPP). In Thymus vulgaris (Thyme), this protein is Putative terpene synthase 2, chloroplastic.